Reading from the N-terminus, the 115-residue chain is NADH-ubiquinone oxidoreductase chain 3 (115 aa).

3 consecutive transmembrane segments (helical) span residues 4–24 (LLVIAVNTILSLILITVAFWL), 55–75 (FFLVAITFLLFDLEIALLLPI), and 84–104 (INMVLPTALILLTILALGLAY).

It belongs to the complex I subunit 3 family. Core subunit of respiratory chain NADH dehydrogenase (Complex I) which is composed of 45 different subunits. Interacts with TMEM186. Interacts with TMEM242.

Its subcellular location is the mitochondrion inner membrane. The catalysed reaction is a ubiquinone + NADH + 5 H(+)(in) = a ubiquinol + NAD(+) + 4 H(+)(out). In terms of biological role, core subunit of the mitochondrial membrane respiratory chain NADH dehydrogenase (Complex I) which catalyzes electron transfer from NADH through the respiratory chain, using ubiquinone as an electron acceptor. Essential for the catalytic activity of complex I. This Ochrotomys nuttalli (Golden mouse) protein is NADH-ubiquinone oxidoreductase chain 3.